A 183-amino-acid polypeptide reads, in one-letter code: Negative modulator of initiation of replication (183 aa).

An interaction with DNA region spans residues 90–91; it reads AV.

The protein belongs to the SeqA family. In terms of assembly, homodimer. Polymerizes to form helical filaments.

It localises to the cytoplasm. Functionally, negative regulator of replication initiation, which contributes to regulation of DNA replication and ensures that replication initiation occurs exactly once per chromosome per cell cycle. Binds to pairs of hemimethylated GATC sequences in the oriC region, thus preventing assembly of replication proteins and re-initiation at newly replicated origins. Repression is relieved when the region becomes fully methylated. In Shewanella oneidensis (strain ATCC 700550 / JCM 31522 / CIP 106686 / LMG 19005 / NCIMB 14063 / MR-1), this protein is Negative modulator of initiation of replication.